Consider the following 282-residue polypeptide: Probable porphobilinogen deaminase (282 aa).

At C233 the chain carries S-(dipyrrolylmethanemethyl)cysteine.

This sequence belongs to the HMBS family. The cofactor is dipyrromethane.

The enzyme catalyses 4 porphobilinogen + H2O = hydroxymethylbilane + 4 NH4(+). Its pathway is porphyrin-containing compound metabolism; protoporphyrin-IX biosynthesis; coproporphyrinogen-III from 5-aminolevulinate: step 2/4. Functionally, tetrapolymerization of the monopyrrole PBG into the hydroxymethylbilane pre-uroporphyrinogen in several discrete steps. The polypeptide is Probable porphobilinogen deaminase (Picrophilus torridus (strain ATCC 700027 / DSM 9790 / JCM 10055 / NBRC 100828 / KAW 2/3)).